Here is a 194-residue protein sequence, read N- to C-terminus: MGEIAQPAFFESKLKQIVYCGVCTLPPEYCEFGGTAKKCEEWLKDNHEETYQRLYSEEALSSNLSTLSVSVRERAAKDAAKKEAKAALAEARDAERKAAAKVQIKRVERNKRKHVTVITGLEVHGLENKKVAKELGKKFATGSSVTKSPAGVEEITVQGDVSEDVQEWLLEVYGKELPESNIELVEDKKKKSSS.

The region spanning 102–173 (VQIKRVERNK…DVQEWLLEVY (72 aa)) is the SUI1 domain.

It belongs to the DENR family. Interacts with the 40S ribosomal subunit.

The protein resides in the cytoplasm. The polypeptide is Translation machinery-associated protein 22 (tma22) (Aspergillus clavatus (strain ATCC 1007 / CBS 513.65 / DSM 816 / NCTC 3887 / NRRL 1 / QM 1276 / 107)).